A 526-amino-acid chain; its full sequence is Thymocyte selection-associated high mobility group box protein TOX (526 aa).

Disordered stretches follow at residues 138–178 and 192–264; these read MPDI…PHGQ and GLNM…PQKP. Residues 192-203 show a composition bias toward polar residues; it reads GLNMGGSNVPHN. Low complexity predominate over residues 209–220; sequence GSKSATPSPSSS. A compositionally biased stretch (basic and acidic residues) spans 228 to 245; that stretch reads DTSKINGGEKRPASDMGK. The Nuclear localization signal motif lies at 237–256; that stretch reads KRPASDMGKKPKTPKKKKKK. Positions 246–256 are enriched in basic residues; it reads KPKTPKKKKKK. Residues 261–329 constitute a DNA-binding region (HMG box); it reads PQKPVSAYAL…EYLKQLAAYR (69 aa).

The protein belongs to the high motility group (HMG) box superfamily. As to quaternary structure, interacts with HBO1 complex composed at least of KAT7/HBO1, ING4, MEAF6, and JADE2; this complex is involved in histone acetylation. Interacts with DNMT1, LEO1, PAF1, SAP130 and SIN3A; these interactors regulate chromatin remodeling. Interacts with an array of proteins involved in RNA processing and translation and DNA replication. Expressed in NK cells. Highly expressed in tumor-infiltrating CD8-positive T cells (at protein level).

The protein resides in the nucleus. Its function is as follows. Transcriptional regulator with a major role in neural stem cell commitment and corticogenesis as well as in lymphoid cell development and lymphoid tissue organogenesis. Binds to GC-rich DNA sequences in the proximity of transcription start sites and may alter chromatin structure, modifying access of transcription factors to DNA. During cortical development, controls the neural stem cell pool by inhibiting the switch from proliferative to differentiating progenitors. Beyond progenitor cells, promotes neurite outgrowth in newborn neurons migrating to reach the cortical plate. May activate or repress critical genes for neural stem cell fate such as SOX2, EOMES and ROBO2. Plays an essential role in the development of lymphoid tissue-inducer (LTi) cells, a subset necessary for the formation of secondary lymphoid organs: peripheral lymph nodes and Peyer's patches. Acts as a developmental checkpoint and regulates thymocyte positive selection toward T cell lineage commitment. Required for the development of various T cell subsets, including CD4-positive helper T cells, CD8-positive cytotoxic T cells, regulatory T cells and CD1D-dependent natural killer T (NKT) cells. Required for the differentiation of common lymphoid progenitors (CMP) to innate lymphoid cells (ILC). May regulate the NOTCH-mediated gene program, promoting differentiation of the ILC lineage. Required at the progenitor phase of NK cell development in the bone marrow to specify NK cell lineage commitment. Upon chronic antigen stimulation, diverts T cell development by promoting the generation of exhaustive T cells, while suppressing effector and memory T cell programming. May regulate the expression of genes encoding inhibitory receptors such as PDCD1 and induce the exhaustion program, to prevent the overstimulation of T cells and activation-induced cell death. In Homo sapiens (Human), this protein is Thymocyte selection-associated high mobility group box protein TOX.